Reading from the N-terminus, the 181-residue chain is Translationally-controlled tumor protein homolog (181 aa).

The TCTP domain maps to 1 to 181 (MLIFKDAFTD…VKEALVEEKQ (181 aa)).

It belongs to the TCTP family.

The protein localises to the cytoplasm. Its function is as follows. Involved in calcium binding and microtubule stabilization. The sequence is that of Translationally-controlled tumor protein homolog from Wuchereria bancrofti.